A 114-amino-acid polypeptide reads, in one-letter code: Large ribosomal subunit protein bL19 (114 aa).

Belongs to the bacterial ribosomal protein bL19 family.

In terms of biological role, this protein is located at the 30S-50S ribosomal subunit interface and may play a role in the structure and function of the aminoacyl-tRNA binding site. The polypeptide is Large ribosomal subunit protein bL19 (rplS) (Listeria innocua serovar 6a (strain ATCC BAA-680 / CLIP 11262)).